Here is a 204-residue protein sequence, read N- to C-terminus: MNTQPLRVGIGGPVGSGKTALTLALCLALRERYNLAVVTNDIYTREDADFLVRNEALAPERIIGVETGGCPHTAIREDASINLEAVDQLNRRFPGLDLILVESGGDNLSATFSPELSDLTIYVIDVSAGDKLPRKGGPGICKSDLLVINKIDLAPLVGASLEMMNSDTQRMRNGKPFVFSNQKTGQGLEEIIAFIERQGLLTAA.

Position 12–19 (12–19) interacts with GTP; it reads GPVGSGKT.

The protein belongs to the SIMIBI class G3E GTPase family. UreG subfamily. Homodimer. UreD, UreF and UreG form a complex that acts as a GTP-hydrolysis-dependent molecular chaperone, activating the urease apoprotein by helping to assemble the nickel containing metallocenter of UreC. The UreE protein probably delivers the nickel.

It localises to the cytoplasm. Functionally, facilitates the functional incorporation of the urease nickel metallocenter. This process requires GTP hydrolysis, probably effectuated by UreG. The polypeptide is Urease accessory protein UreG (Pseudomonas fluorescens (strain Pf0-1)).